Reading from the N-terminus, the 248-residue chain is Ubiquinone biosynthesis O-methyltransferase (248 aa).

Positions 41, 72, 93, and 136 each coordinate S-adenosyl-L-methionine.

It belongs to the methyltransferase superfamily. UbiG/COQ3 family.

The enzyme catalyses a 3-demethylubiquinol + S-adenosyl-L-methionine = a ubiquinol + S-adenosyl-L-homocysteine + H(+). It carries out the reaction a 3-(all-trans-polyprenyl)benzene-1,2-diol + S-adenosyl-L-methionine = a 2-methoxy-6-(all-trans-polyprenyl)phenol + S-adenosyl-L-homocysteine + H(+). It participates in cofactor biosynthesis; ubiquinone biosynthesis. In terms of biological role, O-methyltransferase that catalyzes the 2 O-methylation steps in the ubiquinone biosynthetic pathway. The chain is Ubiquinone biosynthesis O-methyltransferase from Sinorhizobium medicae (strain WSM419) (Ensifer medicae).